We begin with the raw amino-acid sequence, 58 residues long: Small ribosomal subunit protein bS21C (58 aa).

The interval 38 to 58 (YEKPSLRRKRKAEAARKGGRY) is disordered. Residues 49–58 (AEAARKGGRY) are compositionally biased toward basic and acidic residues.

The protein belongs to the bacterial ribosomal protein bS21 family.

The sequence is that of Small ribosomal subunit protein bS21C (rpsU3) from Nostoc sp. (strain PCC 7120 / SAG 25.82 / UTEX 2576).